We begin with the raw amino-acid sequence, 202 residues long: uncharacterized protein (202 aa).

The interval 178-202 (VCSSEDSEADRYSDYGWGGPSSPFN) is disordered.

This is an uncharacterized protein from Homo sapiens (Human).